The sequence spans 468 residues: ATP-dependent protease ATPase subunit HslU (468 aa).

ATP contacts are provided by residues valine 22 and 64–69 (GVGKTE). The segment at 166 to 187 (FGNNDEEDEEPPTEDIKTKRSE) is disordered. The span at 169–178 (NDEEDEEPPT) shows a compositional bias: acidic residues. ATP contacts are provided by aspartate 281, glutamate 346, and arginine 418.

Belongs to the ClpX chaperone family. HslU subfamily. In terms of assembly, a double ring-shaped homohexamer of HslV is capped on each side by a ring-shaped HslU homohexamer. The assembly of the HslU/HslV complex is dependent on binding of ATP.

The protein localises to the cytoplasm. ATPase subunit of a proteasome-like degradation complex; this subunit has chaperone activity. The binding of ATP and its subsequent hydrolysis by HslU are essential for unfolding of protein substrates subsequently hydrolyzed by HslV. HslU recognizes the N-terminal part of its protein substrates and unfolds these before they are guided to HslV for hydrolysis. In Staphylococcus carnosus (strain TM300), this protein is ATP-dependent protease ATPase subunit HslU.